The chain runs to 116 residues: Large ribosomal subunit protein eL30 (116 aa).

It belongs to the eukaryotic ribosomal protein eL30 family. As to quaternary structure, component of the large ribosomal subunit.

Its subcellular location is the cytoplasm. In terms of biological role, component of the large ribosomal subunit. The ribosome is a large ribonucleoprotein complex responsible for the synthesis of proteins in the cell. In Ictalurus punctatus (Channel catfish), this protein is Large ribosomal subunit protein eL30 (rpl30).